A 422-amino-acid polypeptide reads, in one-letter code: MNKLHQWKERLRDRARTVSFGRFLWRRFLDDRLFQAAASLAYTTVFALVPLAIVVFGVLSAFPAFNEWKDALTDFIFNNFVPGAARSVQNYLNRSLEDLGKFTVAGMVALVASLLITLHSIEQTFNSIWRVAAARPKVTRFLIYWTVLTLGTMLAAASMAMAAYVFALPLFRTTEGQWLAEFAWRLAPMAVEFVCIVLIYRVVPQHVVRLRHALPGALLAVILMEIVKWGFGFYLGNFQTYQRIYGALSALPILLLWIYLSWVSVLLGASLASSMSAFRYQPEAMRLPPGFEIYGLLRLLGRFSQARVHGDGLDEDRILALEPMLTDTLMQELLCELKRIRLLRRDERGQWLLARDLDVVPLAELYENCQLRVPIEDRPLPCRDDAFGQAAAAALEQLRQPLRSVLAQPVGDLYTHLPGDPP.

A run of 6 helical transmembrane segments spans residues 45 to 65, 102 to 122, 151 to 171, 179 to 199, 213 to 233, and 247 to 267; these read VFAL…FPAF, FTVA…HSIE, GTML…LPLF, LAEF…IVLI, ALPG…GFGF, and ALSA…SVLL.

The protein belongs to the UPF0761 family.

Its subcellular location is the cell inner membrane. The chain is UPF0761 membrane protein XAC0937 from Xanthomonas axonopodis pv. citri (strain 306).